The chain runs to 157 residues: Regenerating islet-derived protein 4 (157 aa).

A signal peptide spans 1 to 22 (MASKCVRLLLLLSWVAGPEVLS). Cysteine 29 and cysteine 40 are oxidised to a cystine. The C-type lectin domain occupies 36–154 (YRSHCYGYFR…CTKRQHFLCK (119 aa)). Residues asparagine 49, asparagine 62, and asparagine 101 are each glycosylated (N-linked (GlcNAc...) asparagine). Cystine bridges form between cysteine 57/cysteine 153 and cysteine 128/cysteine 145. Residues 97 to 101 (DPQKN) and 134 to 136 (KDK) each bind a carbohydrate.

It is found in the secreted. Calcium-independent lectin displaying mannose-binding specificity and able to maintain carbohydrate recognition activity in an acidic environment. May be involved in inflammatory and metaplastic responses of the gastrointestinal epithelium. The protein is Regenerating islet-derived protein 4 (Reg4) of Rattus norvegicus (Rat).